A 142-amino-acid polypeptide reads, in one-letter code: Large ribosomal subunit protein bL17 (142 aa).

This sequence belongs to the bacterial ribosomal protein bL17 family. As to quaternary structure, part of the 50S ribosomal subunit. Contacts protein L32.

The polypeptide is Large ribosomal subunit protein bL17 (Methylocella silvestris (strain DSM 15510 / CIP 108128 / LMG 27833 / NCIMB 13906 / BL2)).